An 84-amino-acid polypeptide reads, in one-letter code: Small ribosomal subunit protein bS18 (84 aa).

This sequence belongs to the bacterial ribosomal protein bS18 family. As to quaternary structure, part of the 30S ribosomal subunit. Forms a tight heterodimer with protein bS6.

In terms of biological role, binds as a heterodimer with protein bS6 to the central domain of the 16S rRNA, where it helps stabilize the platform of the 30S subunit. This Ruthia magnifica subsp. Calyptogena magnifica protein is Small ribosomal subunit protein bS18.